Consider the following 80-residue polypeptide: Large ribosomal subunit protein uL29 (80 aa).

The protein belongs to the universal ribosomal protein uL29 family.

The protein is Large ribosomal subunit protein uL29 (rpmC) of Mycobacterium leprae (strain TN).